We begin with the raw amino-acid sequence, 483 residues long: Cobyric acid synthase (483 aa).

The 179-residue stretch at 252-430 (ALQVVAVAYP…LHRLFDSGPF (179 aa)) folds into the GATase cobBQ-type domain. The Nucleophile role is filled by Cys333. His422 is a catalytic residue.

It belongs to the CobB/CobQ family. CobQ subfamily.

Its pathway is cofactor biosynthesis; adenosylcobalamin biosynthesis. Its function is as follows. Catalyzes amidations at positions B, D, E, and G on adenosylcobyrinic A,C-diamide. NH(2) groups are provided by glutamine, and one molecule of ATP is hydrogenolyzed for each amidation. The protein is Cobyric acid synthase of Halorhodospira halophila (strain DSM 244 / SL1) (Ectothiorhodospira halophila (strain DSM 244 / SL1)).